We begin with the raw amino-acid sequence, 388 residues long: Succinate--CoA ligase [ADP-forming] subunit beta (388 aa).

Positions 9 to 244 constitute an ATP-grasp domain; the sequence is KEILRKFGVA…LDEEDPAEIE (236 aa). ATP contacts are provided by residues lysine 46, 53-55, glutamate 99, alanine 102, and glutamate 107; that span reads GRG. Asparagine 199 and aspartate 213 together coordinate Mg(2+). Residues asparagine 264 and 321 to 323 contribute to the substrate site; that span reads GIM.

It belongs to the succinate/malate CoA ligase beta subunit family. In terms of assembly, heterotetramer of two alpha and two beta subunits. Mg(2+) serves as cofactor.

It carries out the reaction succinate + ATP + CoA = succinyl-CoA + ADP + phosphate. The enzyme catalyses GTP + succinate + CoA = succinyl-CoA + GDP + phosphate. It participates in carbohydrate metabolism; tricarboxylic acid cycle; succinate from succinyl-CoA (ligase route): step 1/1. Its function is as follows. Succinyl-CoA synthetase functions in the citric acid cycle (TCA), coupling the hydrolysis of succinyl-CoA to the synthesis of either ATP or GTP and thus represents the only step of substrate-level phosphorylation in the TCA. The beta subunit provides nucleotide specificity of the enzyme and binds the substrate succinate, while the binding sites for coenzyme A and phosphate are found in the alpha subunit. The chain is Succinate--CoA ligase [ADP-forming] subunit beta from Burkholderia multivorans (strain ATCC 17616 / 249).